The primary structure comprises 173 residues: NADH-ubiquinone oxidoreductase chain 6 (173 aa).

The next 5 helical transmembrane spans lie at 1–21 (MTYF…AVAS), 27–47 (YGVV…LSLG), 48–68 (VSFV…VVFV), 91–111 (GVGF…IGCL), and 141–161 (VGMF…VLEL).

It belongs to the complex I subunit 6 family.

It localises to the mitochondrion membrane. It carries out the reaction a ubiquinone + NADH + 5 H(+)(in) = a ubiquinol + NAD(+) + 4 H(+)(out). In terms of biological role, core subunit of the mitochondrial membrane respiratory chain NADH dehydrogenase (Complex I) that is believed to belong to the minimal assembly required for catalysis. Complex I functions in the transfer of electrons from NADH to the respiratory chain. The immediate electron acceptor for the enzyme is believed to be ubiquinone. This is NADH-ubiquinone oxidoreductase chain 6 (MT-ND6) from Fratercula arctica (Atlantic puffin).